The sequence spans 491 residues: Glutamyl-tRNA(Gln) amidotransferase subunit A (491 aa).

Catalysis depends on charge relay system residues Lys-77 and Ser-152. Ser-176 acts as the Acyl-ester intermediate in catalysis.

It belongs to the amidase family. GatA subfamily. In terms of assembly, heterotrimer of A, B and C subunits.

The enzyme catalyses L-glutamyl-tRNA(Gln) + L-glutamine + ATP + H2O = L-glutaminyl-tRNA(Gln) + L-glutamate + ADP + phosphate + H(+). Functionally, allows the formation of correctly charged Gln-tRNA(Gln) through the transamidation of misacylated Glu-tRNA(Gln) in organisms which lack glutaminyl-tRNA synthetase. The reaction takes place in the presence of glutamine and ATP through an activated gamma-phospho-Glu-tRNA(Gln). The chain is Glutamyl-tRNA(Gln) amidotransferase subunit A from Chlamydia felis (strain Fe/C-56) (Chlamydophila felis).